A 757-amino-acid polypeptide reads, in one-letter code: Filensin (757 aa).

The interval 1–39 (MYRRSYVFQTRKEQYERAEEAPRAAEPDRLAEARAAAPN) is head. S5 is modified (phosphoserine). The 281-residue stretch at 39 to 319 (NLAALQGLGE…RIIENEGNRL (281 aa)) folds into the IF rod domain. Residues 40 to 74 (LAALQGLGERVAAHVQRARALEQRHAVLRRQLDAF) form a coil 1A region. The residue at position 41 (A41) is an N-acetylalanine. Positions 75 to 83 (QRLDELAGP) are linker 1. Positions 84-183 (EDALARHVEG…RYKKNLLEIQ (100 aa)) are coil 1B. A linker 12 region spans residues 184–200 (TYVTILQQIIQTTPQAA). The interval 201–319 (AITSGMREEK…RIIENEGNRL (119 aa)) is coil 2. The tail stretch occupies residues 320–756 (SSAFIETPIT…KKLGEKGSSS (437 aa)). 2 positions are modified to phosphoserine: S340 and S419. 2 disordered regions span residues 406-436 (EGES…GGKI) and 493-705 (GVVV…PPRK). G433 carries N-myristoyl glycine lipidation. The segment covering 493 to 512 (GVVVSKGDDSVPPDSGVEPS) has biased composition (low complexity). Phosphoserine is present on S512. A compositionally biased stretch (basic and acidic residues) spans 528 to 658 (QEKEDGLKEE…KQDDQKEEGA (131 aa)). Repeat 1 spans residues 532–545 (DGLKEEGGPPEGKG). The interval 532–622 (DGLKEEGGPP…EEEGPLQKKE (91 aa)) is 7 X 14 AA tandem repeats. A 2; truncated repeat occupies 546-552 (EPPEGKG). A run of 5 repeats spans residues 553 to 566 (DSVK…EGKG), 567 to 580 (DGVK…EGKG), 581 to 594 (DGVK…EGKG), 595 to 608 (DGVK…EGKG), and 609 to 622 (EGLK…QKKE). Residues T628 and T674 each carry the phosphothreonine modification. S701, S754, and S755 each carry phosphoserine.

This sequence belongs to the intermediate filament family. In terms of assembly, part of a complex required for lens intermediate filament formation composed of BFSP1, BFSP2 and CRYAA. Identified in a complex that contains VIM, EZR, AHNAK, BFSP1, BFSP2, ANK2, PLEC, PRX and spectrin. Found in a complex composed of PPL (via C-terminal linker domain), BFSP1 and BFSP2 in the retinal lens. Within the complex interacts with BFSP2. Interacts (via C-terminus) with MIP (via C-terminus) in aged lens fiber cells. Proteolytically cleaved during lens cell fiber differentiation with increased fragmentation as fiber cell age increases. Post-translationally, myristoylated at Gly-433 following proteolytic cleavage at Asp-432. In terms of processing, acetylated at Ala-41 following proteolytic cleavage at Leu-40. Abundantly expressed in both the inner and outer cortex of the retina, expressed at a lower level in the nucleus of the retina (at protein level). Detected in eye lens fiber cells (at protein level).

The protein resides in the cell membrane. Its subcellular location is the cytoplasm. The protein localises to the cytoskeleton. It is found in the cell cortex. In terms of biological role, required for the correct formation of lens intermediate filaments as part of a complex composed of BFSP1, BFSP2 and CRYAA. Involved in altering the calcium regulation of MIP water permeability. In Bos taurus (Bovine), this protein is Filensin (BFSP1).